The chain runs to 282 residues: Protoheme IX farnesyltransferase (282 aa).

Helical transmembrane passes span 13–33, 36–56, 74–96, 101–120, 129–149, 156–176, 207–227, 232–252, and 261–281; these read VAGM…GAAG, MVTS…FNQI, ASGR…PALI, AGGV…YNGV, AFSL…GWLA, SPEI…HFWL, LWYA…FIAE, IAVC…LASP, and VSML…SGII.

Belongs to the UbiA prenyltransferase family. Protoheme IX farnesyltransferase subfamily.

Its subcellular location is the cell inner membrane. The enzyme catalyses heme b + (2E,6E)-farnesyl diphosphate + H2O = Fe(II)-heme o + diphosphate. The protein operates within porphyrin-containing compound metabolism; heme O biosynthesis; heme O from protoheme: step 1/1. Converts heme B (protoheme IX) to heme O by substitution of the vinyl group on carbon 2 of heme B porphyrin ring with a hydroxyethyl farnesyl side group. This Oleidesulfovibrio alaskensis (strain ATCC BAA-1058 / DSM 17464 / G20) (Desulfovibrio alaskensis) protein is Protoheme IX farnesyltransferase.